A 741-amino-acid polypeptide reads, in one-letter code: 1,4-alpha-glucan branching enzyme GlgB (741 aa).

D420 serves as the catalytic Nucleophile. The Proton donor role is filled by E473.

This sequence belongs to the glycosyl hydrolase 13 family. GlgB subfamily. In terms of assembly, monomer.

The enzyme catalyses Transfers a segment of a (1-&gt;4)-alpha-D-glucan chain to a primary hydroxy group in a similar glucan chain.. It functions in the pathway glycan biosynthesis; glycogen biosynthesis. Catalyzes the formation of the alpha-1,6-glucosidic linkages in glycogen by scission of a 1,4-alpha-linked oligosaccharide from growing alpha-1,4-glucan chains and the subsequent attachment of the oligosaccharide to the alpha-1,6 position. This Pseudomonas syringae pv. syringae (strain B728a) protein is 1,4-alpha-glucan branching enzyme GlgB.